The chain runs to 212 residues: Pyridoxine/pyridoxamine 5'-phosphate oxidase (212 aa).

Residues 8–11 and Lys66 each bind substrate; that span reads RTDY. FMN contacts are provided by residues 61–66, 76–77, Lys83, and Gln105; these read RIVLLK and FT. Substrate contacts are provided by Tyr123, Arg127, and Ser131. FMN-binding positions include 140–141 and Trp184; that span reads QS. 190–192 lines the substrate pocket; sequence RLH. An FMN-binding site is contributed by Arg194.

It belongs to the pyridoxamine 5'-phosphate oxidase family. In terms of assembly, homodimer. FMN is required as a cofactor.

The enzyme catalyses pyridoxamine 5'-phosphate + O2 + H2O = pyridoxal 5'-phosphate + H2O2 + NH4(+). It catalyses the reaction pyridoxine 5'-phosphate + O2 = pyridoxal 5'-phosphate + H2O2. Its pathway is cofactor metabolism; pyridoxal 5'-phosphate salvage; pyridoxal 5'-phosphate from pyridoxamine 5'-phosphate: step 1/1. It functions in the pathway cofactor metabolism; pyridoxal 5'-phosphate salvage; pyridoxal 5'-phosphate from pyridoxine 5'-phosphate: step 1/1. In terms of biological role, catalyzes the oxidation of either pyridoxine 5'-phosphate (PNP) or pyridoxamine 5'-phosphate (PMP) into pyridoxal 5'-phosphate (PLP). The sequence is that of Pyridoxine/pyridoxamine 5'-phosphate oxidase from Ralstonia pickettii (strain 12J).